A 442-amino-acid chain; its full sequence is Chromosomal replication initiator protein DnaA (442 aa).

A domain I, interacts with DnaA modulators region spans residues 1–75 (MDAWPRCLER…GNGEVALAVG (75 aa)). The tract at residues 75-104 (GSRPRAPEPAPAPVAATIAPQAAPIAPFAG) is domain II. Residues 105 to 322 (NLDSHYTFAN…GALNTLVARA (218 aa)) form a domain III, AAA+ region region. The ATP site is built by G150, G152, K153, and T154. The segment at 323 to 442 (NFTGRSITVE…WEKLIRKLSE (120 aa)) is domain IV, binds dsDNA.

The protein belongs to the DnaA family. In terms of assembly, oligomerizes as a right-handed, spiral filament on DNA at oriC.

It is found in the cytoplasm. In terms of biological role, plays an essential role in the initiation and regulation of chromosomal replication. ATP-DnaA binds to the origin of replication (oriC) to initiate formation of the DNA replication initiation complex once per cell cycle. Binds the DnaA box (a 9 base pair repeat at the origin) and separates the double-stranded (ds)DNA. Forms a right-handed helical filament on oriC DNA; dsDNA binds to the exterior of the filament while single-stranded (ss)DNA is stabiized in the filament's interior. The ATP-DnaA-oriC complex binds and stabilizes one strand of the AT-rich DNA unwinding element (DUE), permitting loading of DNA polymerase. After initiation quickly degrades to an ADP-DnaA complex that is not apt for DNA replication. Binds acidic phospholipids. This is Chromosomal replication initiator protein DnaA from Xanthomonas oryzae pv. oryzae (strain PXO99A).